The following is a 1020-amino-acid chain: Fanconi-associated nuclease 1 (1020 aa).

A compositionally biased stretch (basic and acidic residues) spans 1 to 11 (MPSQRKSPDQK). The interval 1–24 (MPSQRKSPDQKRPRRSLSTSKTAK) is disordered. A D-box motif is present at residues 14–22 (RRSLSTSKT). The segment at 41-69 (KLACSTCHKMVPRYDLIRHLDESCANNGV) adopts a UBZ4-type zinc-finger fold. Cysteine 44, cysteine 47, histidine 59, and cysteine 64 together coordinate Zn(2+). The tract at residues 173 to 208 (KNEGLASQCPQTSPSTPGTSLTDNCPEMEDKDEVLN) is disordered. The segment covering 180-195 (QCPQTSPSTPGTSLTD) has biased composition (polar residues). Positions 212 to 214 (KEN) match the KEN box motif. The segment covering 224–242 (ENASEQKVKNNKITGDESQ) has biased composition (basic and acidic residues). Disordered stretches follow at residues 224–252 (ENASEQKVKNNKITGDESQKASCGEPALT) and 269–288 (LVSNTKSSPGDTLVKQESAR). Over residues 269 to 278 (LVSNTKSSPG) the composition is skewed to polar residues. Positions 673-737 (SSRAVEVLER…AIRCIREGLA (65 aa)) form a coiled coil. Mn(2+) contacts are provided by glutamate 837, aspartate 963, glutamate 978, and valine 979. The VRR-NUC domain occupies 898–1010 (AESLRAWVGE…GADVEVCHVV (113 aa)).

The protein belongs to the FAN1 family. In terms of assembly, interacts with FANCD2 (when monoubiquitinated). Interacts with FANCI, MLH1, MLH3 and PMS2. The cofactor is Mn(2+). Mg(2+) is required as a cofactor. Ubiquitinated and degraded during mitotic exit by the APC/C-Cdh1 complex.

It localises to the nucleus. It carries out the reaction Hydrolytically removes 5'-nucleotides successively from the 3'-hydroxy termini of 3'-hydroxy-terminated oligonucleotides.. Nuclease required for the repair of DNA interstrand cross-links (ICL) recruited at sites of DNA damage by monoubiquitinated FANCD2. Specifically involved in repair of ICL-induced DNA breaks by being required for efficient homologous recombination, probably in the resolution of homologous recombination intermediates. Not involved in DNA double-strand breaks resection. Acts as a 5'-3' exonuclease that anchors at a cut end of DNA and cleaves DNA successively at every third nucleotide, allowing to excise an ICL from one strand through flanking incisions. Probably keeps excising with 3'-flap annealing until it reaches and unhooks the ICL. Acts at sites that have a 5'-terminal phosphate anchor at a nick or a 1- or 2-nucleotide flap and is augmented by a 3' flap. Also has endonuclease activity toward 5'-flaps. This chain is Fanconi-associated nuclease 1, found in Mus musculus (Mouse).